The sequence spans 117 residues: Thioredoxin (117 aa).

The region spanning 2–116 (AISLTEEDFV…FENIIKDFFG (115 aa)) is the Thioredoxin domain. C40 and C43 are joined by a disulfide.

Belongs to the thioredoxin family.

Its function is as follows. Participates in various redox reactions through the reversible oxidation of its active center dithiol to a disulfide and catalyzes dithiol-disulfide exchange reactions. The chain is Thioredoxin (trxA) from Borreliella burgdorferi (strain ATCC 35210 / DSM 4680 / CIP 102532 / B31) (Borrelia burgdorferi).